The primary structure comprises 583 residues: 2-succinyl-5-enolpyruvyl-6-hydroxy-3-cyclohexene-1-carboxylate synthase (583 aa).

Belongs to the TPP enzyme family. MenD subfamily. In terms of assembly, homodimer. Requires Mg(2+) as cofactor. Mn(2+) is required as a cofactor. It depends on thiamine diphosphate as a cofactor.

It catalyses the reaction isochorismate + 2-oxoglutarate + H(+) = 5-enolpyruvoyl-6-hydroxy-2-succinyl-cyclohex-3-ene-1-carboxylate + CO2. The protein operates within quinol/quinone metabolism; 1,4-dihydroxy-2-naphthoate biosynthesis; 1,4-dihydroxy-2-naphthoate from chorismate: step 2/7. Its pathway is quinol/quinone metabolism; menaquinone biosynthesis. Functionally, catalyzes the thiamine diphosphate-dependent decarboxylation of 2-oxoglutarate and the subsequent addition of the resulting succinic semialdehyde-thiamine pyrophosphate anion to isochorismate to yield 2-succinyl-5-enolpyruvyl-6-hydroxy-3-cyclohexene-1-carboxylate (SEPHCHC). The sequence is that of 2-succinyl-5-enolpyruvyl-6-hydroxy-3-cyclohexene-1-carboxylate synthase from Chlorobium limicola (strain DSM 245 / NBRC 103803 / 6330).